A 319-amino-acid polypeptide reads, in one-letter code: Type II secretion system protein C 2 (319 aa).

Residues 1-42 (MARVVFRDARIYLIQWLTKIRHTLNQRQSLNTDKEHLRKIVR) are Cytoplasmic-facing. Residues 43 to 65 (GMFWLMLLIISAKVAHSLWRYFS) form a helical membrane-spanning segment. At 66–319 (FSAEYTAVSP…ARHDISIALR (254 aa)) the chain is on the periplasmic side.

This sequence belongs to the GSP C family. As to quaternary structure, interacts with outer cell membrane protein GspD2 in the periplasm.

The protein localises to the cell inner membrane. Its function is as follows. Involved in a type II secretion system (T2SS, formerly general secretion pathway, GSP) for the export of folded proteins across the outer membrane. This Escherichia coli O78:H11 (strain H10407 / ETEC) protein is Type II secretion system protein C 2 (gspC2).